Reading from the N-terminus, the 225-residue chain is Heptaprenylglyceryl phosphate synthase (225 aa).

Lysine 6 contributes to the sn-glycerol 1-phosphate binding site. Residues aspartate 8 and threonine 34 each contribute to the Mg(2+) site. Residues 153-158, glycine 183, and 203-204 each bind sn-glycerol 1-phosphate; these read YVEYSG and GN.

This sequence belongs to the GGGP/HepGP synthase family. Group I subfamily. Homodimer. Mg(2+) serves as cofactor.

The catalysed reaction is sn-glycerol 1-phosphate + all-trans-heptaprenyl diphosphate = 3-heptaprenyl-sn-glycero-1-phosphate + diphosphate. It functions in the pathway membrane lipid metabolism; glycerophospholipid metabolism. Its function is as follows. Prenyltransferase that catalyzes in vivo the transfer of the heptaprenyl moiety of heptaprenyl pyrophosphate (HepPP; 35 carbon atoms) to the C3 hydroxyl of sn-glycerol-1-phosphate (G1P), producing heptaprenylglyceryl phosphate (HepGP). This reaction is an ether-bond-formation step in the biosynthesis of archaea-type G1P-based membrane lipids found in Bacillales. The chain is Heptaprenylglyceryl phosphate synthase from Listeria monocytogenes serotype 4a (strain HCC23).